Consider the following 142-residue polypeptide: uncharacterized protein (142 aa).

Residues 1 to 138 (MLEKLAEAHP…SFMILVKPLA (138 aa)) enclose the N-acetyltransferase domain.

This is an uncharacterized protein from Bacillus subtilis (strain 168).